A 271-amino-acid chain; its full sequence is Phosphonoacetaldehyde hydrolase (271 aa).

Asp12 acts as the Nucleophile in catalysis. Asp12 and Ala14 together coordinate Mg(2+). The active-site Schiff-base intermediate with substrate is the Lys54. Asp188 contributes to the Mg(2+) binding site.

The protein belongs to the HAD-like hydrolase superfamily. PhnX family. In terms of assembly, homodimer. Mg(2+) serves as cofactor.

The catalysed reaction is phosphonoacetaldehyde + H2O = acetaldehyde + phosphate + H(+). Functionally, involved in phosphonate degradation. This chain is Phosphonoacetaldehyde hydrolase, found in Vibrio campbellii (strain ATCC BAA-1116).